The primary structure comprises 475 residues: MVNKTSTNNNKEPRRMKKHYLKSNASNLKKTLHKIKVRGFEKLPVSVLSGFLGSGKTTLLNYILNSNHGLKIAVIVNDMSEVNIDSKLILENEFKITRTKATEKQVEAVVEMSNGCICCTMREDLLVEVTKLAKEKRFDYLIIESSGISEPLPIAETFTFEIDGSIENLKDYTKLDTMVTVVDCSTWLEQYQSGESLKDKDMQATDQDERSLVDLLLDQVEFSNVILLNKCDLVSEERVKTIEGLIKHINPEARLLRSTNSVVPLKEILNTGLFDFKKASEHPGWLKELRGTHVPETIEYGIKSFIYKARRPFNSERLSNVIEKGSAVFGGVLRSKGFSWIASTPELIGMWNLAGVQMTILNYGYWLADLKPHEYPNLDLQKEIKKNWSEPFGDRRQELVFIGGNTMNQSLIESELNNCLLTDAELLLGKDIWRTWIDPIQLDEELEEEELEEEEEEGEYKDEIEMKVDGSKFKK.

Residue 50–57 coordinates GTP; it reads GFLGSGKT. Positions 116, 118, and 119 each coordinate Zn(2+). Positions 116–119 match the CXCC motif motif; it reads CICC. Residues 119-123 and 229-232 contribute to the GTP site; these read CTMRE and NKCD. Residues 302 to 420 enclose the CobW C-terminal domain; that stretch reads IKSFIYKARR…LIESELNNCL (119 aa). Positions 440 to 467 form a coiled coil; that stretch reads IQLDEELEEEELEEEEEEGEYKDEIEMK. Residues 445 to 460 show a composition bias toward acidic residues; it reads ELEEEELEEEEEEGEY. Positions 445–475 are disordered; it reads ELEEEELEEEEEEGEYKDEIEMKVDGSKFKK. Residues 461–475 are compositionally biased toward basic and acidic residues; the sequence is KDEIEMKVDGSKFKK.

This sequence belongs to the SIMIBI class G3E GTPase family. ZNG1 subfamily.

The catalysed reaction is GTP + H2O = GDP + phosphate + H(+). Zinc chaperone that directly transfers zinc cofactor to target metalloproteins, thereby activating them. Zinc is transferred from the CXCC motif in the GTPase domain to the zinc binding site in target proteins in a process requiring GTP hydrolysis. The protein is Zinc-regulated GTPase metalloprotein activator 1 of Dictyostelium discoideum (Social amoeba).